A 117-amino-acid chain; its full sequence is UPF0122 protein TTE1463 (117 aa).

The protein belongs to the UPF0122 family.

Might take part in the signal recognition particle (SRP) pathway. This is inferred from the conservation of its genetic proximity to ftsY/ffh. May be a regulatory protein. The protein is UPF0122 protein TTE1463 of Caldanaerobacter subterraneus subsp. tengcongensis (strain DSM 15242 / JCM 11007 / NBRC 100824 / MB4) (Thermoanaerobacter tengcongensis).